A 345-amino-acid chain; its full sequence is Serine/threonine-protein kinase US3 homolog (345 aa).

In terms of domain architecture, Protein kinase spans 49–334; that stretch reads FSVLETFTPG…KALLDFAAFY (286 aa). Residues 55–63 and Lys78 contribute to the ATP site; that span reads FTPGAEGFT. The Proton acceptor role is filled by Asp162.

The protein belongs to the protein kinase superfamily. Ser/Thr protein kinase family. Post-translationally, phosphorylated by UL13 homolog; this phosphorylation regulates subsequent phosphorylation of UL31 and UL34 homologs by US3. Autophosphorylated.

The protein localises to the host cytoplasm. Its subcellular location is the host nucleus. It catalyses the reaction L-seryl-[protein] + ATP = O-phospho-L-seryl-[protein] + ADP + H(+). It carries out the reaction L-threonyl-[protein] + ATP = O-phospho-L-threonyl-[protein] + ADP + H(+). Multifunctional serine/threonine kinase that plays a role in several processes including egress of virus particles from the nucleus, modulation of the actin cytoskeleton and inhibition of apoptosis. Phosphorylates UL31 and UL34 homologs, two critical regulators of capsid budding from nucleus to endoplasmic reticulum, thereby facilitating virion egress. Modulates and redistributes host components of the nuclear envelope, including LMNA, emerin/EMD and the nuclear matrix protein MATR3. Phosphorylates envelope glycoprotein B (gB), probably to direct it to the cell surface. Promotes virus intracellular spread by restructuring host cell cytoskeleton. Blocks host apoptosis to extend cell survival and allow efficient viral replication. Promotes viral gene expression by phosphorylating host HDAC2 to reduce viral genome silencing. The sequence is that of Serine/threonine-protein kinase US3 homolog (US2) from Chlorocebus aethiops (Green monkey).